Consider the following 710-residue polypeptide: Choline transporter-like protein 4 (710 aa).

Residues 1–34 lie on the Cytoplasmic side of the membrane; sequence MGGKQRDEDDEAYGKPVKYDPSFRGPIKNRSCTD. A helical transmembrane segment spans residues 35-55; it reads VICCVLFLLFILGYIVVGIVA. Over 56–229 the chain is Extracellular; it reads WLYGDPRQVL…KIFEDFAQSW (174 aa). 3 N-linked (GlcNAc...) asparagine glycosylation sites follow: Asn69, Asn155, and Asn197. A helical membrane pass occupies residues 230 to 250; that stretch reads YWILVALGVALVLSLLFILLL. The Cytoplasmic portion of the chain corresponds to 251–252; the sequence is RL. The chain crosses the membrane as a helical span at residues 253–273; that stretch reads VAGPLVLVLILGVLGVLAYGI. Over 274–309 the chain is Extracellular; sequence YYCWEEYRVLRDKGASISQLGFTTNLSAYQSVQETW. The N-linked (GlcNAc...) asparagine glycan is linked to Asn298. Residues 310 to 330 traverse the membrane as a helical segment; the sequence is LAALIVLAVLEAILLLMLIFL. The Cytoplasmic segment spans residues 331–358; that stretch reads RQRIRIAIALLKEASKAVGQMMSTMFYP. The chain crosses the membrane as a helical span at residues 359–379; that stretch reads LVTFVLLLICIAYWAMTALYL. Residues 380–455 lie on the Extracellular side of the membrane; the sequence is ATSGQPQYVL…GVLGLFWTLN (76 aa). N-linked (GlcNAc...) asparagine glycans are attached at residues Asn393, Asn405, and Asn416. The chain crosses the membrane as a helical span at residues 456-476; it reads WVLALGQCVLAGAFASFYWAF. Residues 477–501 lie on the Cytoplasmic side of the membrane; that stretch reads HKPQDIPTFPLISAFIRTLRYHTGS. A helical membrane pass occupies residues 502–522; sequence LAFGALILTLVQIARVILEYI. At 523 to 560 the chain is on the extracellular side; that stretch reads DHKLRGVQNPVARCIMCCFKCCLWCLEKFIKFLNRNAY. A helical membrane pass occupies residues 561–581; it reads IMIAIYGKNFCVSAKNAFMLL. Residues 582–597 are Cytoplasmic-facing; sequence MRNIVRVVVLDKVTDL. The helical transmembrane segment at 598–618 threads the bilayer; sequence LLFFGKLLVVGGVGVLSFFFF. Residues 619–638 are Extracellular-facing; it reads SGRIPGLGKDFKSPHLNYYW. A helical transmembrane segment spans residues 639 to 659; sequence LPIMTSILGAYVIASGFFSVF. Topologically, residues 660–710 are cytoplasmic; sequence GMCVDTLFLCFLEDLERNNGSLDRPYYMSKSLLKILGKKNEAPPDNKKRKK.

Belongs to the CTL (choline transporter-like) family. N-glycosylated; N-glycosylation of Asn-69, Asn-155 and Asn-393 is required for a proper thiamine pyrophosphate uptake. Highly expressed in colon, also detected in prostate, trachea and lung. Isoform 3 is also expressed in colon but a lower levels. In terms of tissue distribution, expressed in colon at low levels.

It is found in the membrane. The protein localises to the apical cell membrane. It carries out the reaction choline(out) + n H(+)(in) = choline(in) + n H(+)(out). It catalyses the reaction thiamine diphosphate(out) = thiamine diphosphate(in). Functionally, choline transporter that plays a role in the choline-acetylcholine system and is required to the efferent innervation of hair cells in the olivocochlear bundle for the maintenance of physiological function of outer hair cells and the protection of hair cells from acoustic injury. Also described as a thiamine pyrophosphate transporter in colon, may mediate the absorption of microbiota-generated thiamine pyrophosphate and contribute to host thiamine (vitamin B1) homeostasis. Also has thiamine pyrophosphate transporter activity. This Homo sapiens (Human) protein is Choline transporter-like protein 4.